Reading from the N-terminus, the 144-residue chain is UPF0299 membrane protein MS1271 (144 aa).

The next 4 membrane-spanning stretches (helical) occupy residues 5 to 25 (IFLFVRSLIILYLILFIGEGI), 28 to 48 (LIPIGIPGSIFGLLILFIGLT), 57 to 77 (VFFGASLLIRYMAVLFVPVSV), and 92 to 112 (SLLIPNIVSTCVTLLVIGFLG).

This sequence belongs to the UPF0299 family.

The protein localises to the cell inner membrane. The polypeptide is UPF0299 membrane protein MS1271 (Mannheimia succiniciproducens (strain KCTC 0769BP / MBEL55E)).